The sequence spans 923 residues: Neuropilin-1 (923 aa).

The signal sequence occupies residues 1–21 (MERGLPLLCATLALALALAGA). Residues 22 to 856 (FRSDKCGGTI…PGNVLKTLDP (835 aa)) are Extracellular-facing. Intrachain disulfides connect cysteine 27-cysteine 54, cysteine 82-cysteine 104, and cysteine 147-cysteine 173. 2 CUB domains span residues 27–141 (CGGT…YEIF) and 147–265 (CSQN…YSVL). Residue asparagine 150 is glycosylated (N-linked (GlcNAc...) asparagine). 3 residues coordinate Ca(2+): glutamate 195, aspartate 209, and aspartate 250. A disulfide bridge links cysteine 206 with cysteine 228. N-linked (GlcNAc...) asparagine glycosylation is found at asparagine 261, asparagine 300, and asparagine 522. Disulfide bonds link cysteine 275–cysteine 424 and cysteine 431–cysteine 583. F5/8 type C domains are found at residues 275 to 424 (CMEA…VYGC) and 431 to 583 (CSGM…LLGC). An O-linked (Xyl...) (chondroitin sulfate) serine; alternate glycan is attached at serine 612. A glycan (O-linked (Xyl...) (heparan sulfate) serine; alternate) is linked at serine 612. The region spanning 645–811 (TYGFNCEFGW…NHISQEDCAK (167 aa)) is the MAM domain. The tract at residues 820–845 (TEIKIDETGSTPGYEGEGEGDKNISR) is disordered. The O-linked (Xyl...) (chondroitin sulfate) serine glycan is linked to serine 829. Asparagine 842 carries an N-linked (GlcNAc...) asparagine glycan. A helical transmembrane segment spans residues 857 to 879 (ILITIIAMSALGVLLGAVCGVVL). Topologically, residues 880–923 (YCACWHNGMSERNLSALENYNFELVDGVKLKKDKLNPQSNYSEA) are cytoplasmic. A Phosphoserine modification is found at serine 894.

It belongs to the neuropilin family. As to quaternary structure, homodimer, and heterodimer with NRP2. Binds PLXNB1. Interacts with FER. Interacts with VEGFA. Interacts with ABCB8/MITOSUR in mitochondria. Nervous system.

The protein localises to the mitochondrion membrane. The protein resides in the cell membrane. It is found in the cytoplasm. Its function is as follows. Receptor involved in the development of the cardiovascular system, in angiogenesis, in the formation of certain neuronal circuits and in organogenesis outside the nervous system. Mediates the chemorepulsant activity of semaphorins. Recognizes a C-end rule (CendR) motif R/KXXR/K on its ligands which causes cellular internalization and vascular leakage. Binds to semaphorin 3A (SEMA3A), the PLGF-2 isoform of PGF, the VEGF165 isoform of VEGFA and VEGFB. Coexpression with KDR results in increased VEGF165 binding to KDR as well as increased chemotaxis. Regulates VEGF-induced angiogenesis. Binding to VEGFA initiates a signaling pathway needed for motor neuron axon guidance and cell body migration, including for the caudal migration of facial motor neurons from rhombomere 4 to rhombomere 6 during embryonic development. Regulates mitochondrial iron transport via interaction with ABCB8/MITOSUR. The polypeptide is Neuropilin-1 (Mus musculus (Mouse)).